The following is a 214-amino-acid chain: GTP-binding protein ypt3 (214 aa).

17 to 24 lines the GTP pocket; the sequence is GDSGVGKS. The Effector region motif lies at 39-47; the sequence is SKSTIGVEF. A Phosphothreonine modification is found at Thr42. GTP contacts are provided by residues 65 to 69 and 123 to 126; these read DTAGQ and NKTD. Residues Cys213 and Cys214 are each lipidated (S-geranylgeranyl cysteine).

This sequence belongs to the small GTPase superfamily. Rab family.

Its subcellular location is the cell membrane. It localises to the endosome membrane. The protein localises to the golgi apparatus membrane. The protein resides in the cytoplasm. It is found in the nucleus. Functionally, has a role in retrograde traffricking of proteins from the endosome to the Golgi. Involved in the secretory pathway where it has a role in acid phosphatase secretion. In Schizosaccharomyces pombe (strain 972 / ATCC 24843) (Fission yeast), this protein is GTP-binding protein ypt3 (ypt3).